The following is a 302-amino-acid chain: uncharacterized protein (302 aa).

Helical transmembrane passes span 1–21 (MSWIIFYTIIFALLVLDLGVI), 33–53 (SLLFSLFYFTISCLFGIYIYY), 67–87 (FLIEKAMSLDNIFVISIIFQF), 101–121 (FGIIGVIAFRAVMIYGGIILI), 124–144 (FSWLLYIFAVILIATGVKTFY), 185–205 (YVTPLFISLILIEAIDLVFAI), 220–240 (IIYTSNIFAILGLRALFFCLA), 253–273 (LALILIFIGIKIFIHHYIAIP), and 274–294 (AYISLTVTITLLLLGIFASVI).

This sequence belongs to the TerC family.

The protein localises to the cell membrane. This is an uncharacterized protein from Rickettsia bellii (strain RML369-C).